Here is a 341-residue protein sequence, read N- to C-terminus: UDP-3-O-acylglucosamine N-acyltransferase (341 aa).

His-239 acts as the Proton acceptor in catalysis.

This sequence belongs to the transferase hexapeptide repeat family. LpxD subfamily. In terms of assembly, homotrimer.

It carries out the reaction a UDP-3-O-[(3R)-3-hydroxyacyl]-alpha-D-glucosamine + a (3R)-hydroxyacyl-[ACP] = a UDP-2-N,3-O-bis[(3R)-3-hydroxyacyl]-alpha-D-glucosamine + holo-[ACP] + H(+). It participates in bacterial outer membrane biogenesis; LPS lipid A biosynthesis. In terms of biological role, catalyzes the N-acylation of UDP-3-O-acylglucosamine using 3-hydroxyacyl-ACP as the acyl donor. Is involved in the biosynthesis of lipid A, a phosphorylated glycolipid that anchors the lipopolysaccharide to the outer membrane of the cell. In Idiomarina loihiensis (strain ATCC BAA-735 / DSM 15497 / L2-TR), this protein is UDP-3-O-acylglucosamine N-acyltransferase.